Consider the following 91-residue polypeptide: Mercuric transport protein periplasmic component (91 aa).

A signal peptide spans 1–19 (MKKLFASLALAAAVAPVWA). The HMA domain occupies 22-88 (QTVTLAVPGM…ATADAGYPSS (67 aa)). Residues Cys33 and Cys36 each contribute to the Hg(2+) site.

Belongs to the MerP family. In terms of assembly, monomer.

It is found in the periplasm. Involved in mercury resistance. Acts as a mercury scavenger that specifically binds to a mercuric ion in the periplasm and probably passes it to the cytoplasmic mercuric reductase MerA via the mercuric transport protein MerT. The protein is Mercuric transport protein periplasmic component of Shigella flexneri.